Here is a 410-residue protein sequence, read N- to C-terminus: Arginine biosynthesis bifunctional protein ArgJ (410 aa).

Thr-160, Lys-186, Thr-197, Glu-283, Asn-405, and Thr-410 together coordinate substrate. Thr-197 (nucleophile) is an active-site residue.

The protein belongs to the ArgJ family. As to quaternary structure, heterotetramer of two alpha and two beta chains.

The protein resides in the cytoplasm. It catalyses the reaction N(2)-acetyl-L-ornithine + L-glutamate = N-acetyl-L-glutamate + L-ornithine. The enzyme catalyses L-glutamate + acetyl-CoA = N-acetyl-L-glutamate + CoA + H(+). It participates in amino-acid biosynthesis; L-arginine biosynthesis; L-ornithine and N-acetyl-L-glutamate from L-glutamate and N(2)-acetyl-L-ornithine (cyclic): step 1/1. Its pathway is amino-acid biosynthesis; L-arginine biosynthesis; N(2)-acetyl-L-ornithine from L-glutamate: step 1/4. Its activity is regulated as follows. Competitively inhibited by L-ornithine. Catalyzes two activities which are involved in the cyclic version of arginine biosynthesis: the synthesis of N-acetylglutamate from glutamate and acetyl-CoA as the acetyl donor, and of ornithine by transacetylation between N(2)-acetylornithine and glutamate. In Geobacillus stearothermophilus (Bacillus stearothermophilus), this protein is Arginine biosynthesis bifunctional protein ArgJ.